The following is a 272-amino-acid chain: MTDMYSLFVAFVLGVVEGLTEFLPVSSTGHMIIVGELLGFTGDKAKTFEVIIQLGSILAVVVVFWRRLFGLIGIHFGKVPHEGKTNGHLTLGHILLAMIPAVGLGLAFHDVIKSLFNPQSVMYALVAGGLLLLAAEWFKPKNPKATGLDDITYRQAFAIGCFQCLALWPGFSRSGATISGGMLVGVNRYAASEFSFILAVPMMLGASGLDLYKSLHFLSWGDLPMFAVGFITAFVVALIAIKTFLSLIKRISFVPFAIYRFIVAAAVYWVFM.

8 consecutive transmembrane segments (helical) span residues Y5–V25, A45–W65, H88–F108, L115–A135, T152–F171, Y189–L209, G221–I241, and I251–F271.

The protein belongs to the UppP family.

It is found in the cell inner membrane. The catalysed reaction is di-trans,octa-cis-undecaprenyl diphosphate + H2O = di-trans,octa-cis-undecaprenyl phosphate + phosphate + H(+). In terms of biological role, catalyzes the dephosphorylation of undecaprenyl diphosphate (UPP). Confers resistance to bacitracin. This is Undecaprenyl-diphosphatase from Yersinia enterocolitica serotype O:8 / biotype 1B (strain NCTC 13174 / 8081).